The sequence spans 322 residues: Ribonucleoside-diphosphate reductase subunit beta nrdF1 (322 aa).

Residues Asp70, Glu101, and His104 each coordinate Fe cation. Tyr108 is an active-site residue. 3 residues coordinate Fe cation: Glu161, Glu195, and His198.

Belongs to the ribonucleoside diphosphate reductase small chain family. Tetramer of two alpha and two beta subunits. Fe cation serves as cofactor.

It carries out the reaction a 2'-deoxyribonucleoside 5'-diphosphate + [thioredoxin]-disulfide + H2O = a ribonucleoside 5'-diphosphate + [thioredoxin]-dithiol. Its function is as follows. Provides the precursors necessary for DNA synthesis. Catalyzes the biosynthesis of deoxyribonucleotides from the corresponding ribonucleotides. The polypeptide is Ribonucleoside-diphosphate reductase subunit beta nrdF1 (nrdF1) (Mycobacterium tuberculosis (strain CDC 1551 / Oshkosh)).